A 229-amino-acid chain; its full sequence is Putative N-acetylmannosamine-6-phosphate 2-epimerase (229 aa).

The protein belongs to the NanE family.

The enzyme catalyses an N-acyl-D-glucosamine 6-phosphate = an N-acyl-D-mannosamine 6-phosphate. It functions in the pathway amino-sugar metabolism; N-acetylneuraminate degradation; D-fructose 6-phosphate from N-acetylneuraminate: step 3/5. Its function is as follows. Converts N-acetylmannosamine-6-phosphate (ManNAc-6-P) to N-acetylglucosamine-6-phosphate (GlcNAc-6-P). This is Putative N-acetylmannosamine-6-phosphate 2-epimerase from Escherichia coli O139:H28 (strain E24377A / ETEC).